Consider the following 113-residue polypeptide: P antigen family member 3 (113 aa).

Basic residues predominate over residues 1–12; that stretch reads MSGHQRTRSRSR. Disordered regions lie at residues 1 to 61 and 78 to 113; these read MSGH…EGAL and SKTGGERGDGPNVKGEFLPNLEPVKIPEAGEGQPSV.

The protein belongs to the GAGE family.

This Homo sapiens (Human) protein is P antigen family member 3 (PAGE3).